Reading from the N-terminus, the 185-residue chain is Cell wall protein phiA (185 aa).

The signal sequence occupies residues 1-18 (MQIKSFVLAASAAATASA). The N-linked (GlcNAc...) asparagine glycan is linked to Asn60.

It belongs to the phiA family.

The protein localises to the secreted. The protein resides in the cell wall. Functionally, cell wall protein involved in development of asexual structures such as phialide and conidium development, and thus required for spore formation. Plays a role as a general stress protectant produced by the fungus in competition with antagonistic bacteria. The protein is Cell wall protein phiA of Aspergillus fumigatus (strain CBS 144.89 / FGSC A1163 / CEA10) (Neosartorya fumigata).